Consider the following 132-residue polypeptide: Small ribosomal subunit protein uS8 (132 aa).

It belongs to the universal ribosomal protein uS8 family. Part of the 30S ribosomal subunit. Contacts proteins S5 and S12.

In terms of biological role, one of the primary rRNA binding proteins, it binds directly to 16S rRNA central domain where it helps coordinate assembly of the platform of the 30S subunit. In Staphylococcus aureus (strain USA300), this protein is Small ribosomal subunit protein uS8.